The following is a 365-amino-acid chain: Tubulin-like protein CetZ (365 aa).

GTP is bound by residues 10 to 14 (QCGTK), 103 to 105 (GTG), glutamate 136, asparagine 163, and asparagine 181.

The protein belongs to the CetZ family.

It is found in the cytoplasm. In terms of biological role, involved in cell shape control. The chain is Tubulin-like protein CetZ from Pyrococcus horikoshii (strain ATCC 700860 / DSM 12428 / JCM 9974 / NBRC 100139 / OT-3).